The primary structure comprises 86 residues: Small ribosomal subunit protein bS20 (86 aa).

This sequence belongs to the bacterial ribosomal protein bS20 family.

Its function is as follows. Binds directly to 16S ribosomal RNA. In Arthrobacter sp. (strain FB24), this protein is Small ribosomal subunit protein bS20.